Reading from the N-terminus, the 125-residue chain is Large ribosomal subunit protein bL21 (125 aa).

Basic residues predominate over residues 75-89 (FKKRRRQNSKRKRGH). Disordered regions lie at residues 75-94 (FKKR…QDLT) and 103-125 (AGGA…APEA). A compositionally biased stretch (low complexity) spans 106-125 (ASPAAAAASSETPAASAPEA).

The protein belongs to the bacterial ribosomal protein bL21 family. As to quaternary structure, part of the 50S ribosomal subunit. Contacts protein L20.

This protein binds to 23S rRNA in the presence of protein L20. The polypeptide is Large ribosomal subunit protein bL21 (Methylocella silvestris (strain DSM 15510 / CIP 108128 / LMG 27833 / NCIMB 13906 / BL2)).